Reading from the N-terminus, the 288-residue chain is Cell division protein ZipA (288 aa).

A topological domain (periplasmic) is located at residue Met-1. A helical membrane pass occupies residues 2-22 (EIGLREWLIVIGIIVIAGILF). Residues 23–288 (DGWRRMRGGK…ERRALTQRRG (266 aa)) lie on the Cytoplasmic side of the membrane. The segment at 48–138 (DEEETTSAEV…DDKPAQRITE (91 aa)) is disordered. Basic and acidic residues-rich tracts occupy residues 64-77 (LDTH…EHDL), 85-105 (RDNK…KDEP), and 122-138 (ARDD…RITE).

This sequence belongs to the ZipA family. As to quaternary structure, interacts with FtsZ via their C-terminal domains.

It localises to the cell inner membrane. Its function is as follows. Essential cell division protein that stabilizes the FtsZ protofilaments by cross-linking them and that serves as a cytoplasmic membrane anchor for the Z ring. Also required for the recruitment to the septal ring of downstream cell division proteins. The polypeptide is Cell division protein ZipA (Pseudomonas syringae pv. tomato (strain ATCC BAA-871 / DC3000)).